A 223-amino-acid chain; its full sequence is Trichome differentiation protein GL1 (223 aa).

2 consecutive HTH myb-type domains span residues 11 to 63 (NQEY…MNYL) and 64 to 118 (SPNV…SKKL). 2 consecutive DNA-binding regions (H-T-H motif) follow at residues 39–63 (WNRIVRKTGLKRCGKSCRLRWMNYL) and 91–114 (WSLIAKRVPGRTDNQVKNYWNTHL).

The protein localises to the nucleus. Regulates the production of a signal that induces hair (trichome) precursor cells on leaf primordia to differentiate. The polypeptide is Trichome differentiation protein GL1 (GL1) (Arabidopsis lyrata (Lyre-leaved rock-cress)).